Reading from the N-terminus, the 86-residue chain is MADDITETSQTVAAGQLRALIERIERLEEEKKTIADDIKEVFAEAKGTGFDTKAIRTIIRLRKKDQAERQEEDAILDLYMAALGMV.

It belongs to the UPF0335 family.

This is UPF0335 protein mll3968 from Mesorhizobium japonicum (strain LMG 29417 / CECT 9101 / MAFF 303099) (Mesorhizobium loti (strain MAFF 303099)).